The following is a 313-amino-acid chain: Altered inheritance of mitochondria protein 32 (313 aa).

It belongs to the AIM32 family.

This Candida glabrata (strain ATCC 2001 / BCRC 20586 / JCM 3761 / NBRC 0622 / NRRL Y-65 / CBS 138) (Yeast) protein is Altered inheritance of mitochondria protein 32 (AIM32).